The primary structure comprises 424 residues: STAM-binding protein (424 aa).

The interval 1 to 127 (MSDHGDVSLP…YEQYKERKKK (127 aa)) is interaction with CHMP3. 2 positions are modified to phosphoserine: Ser2 and Ser48. Residues 227 to 231 (PAKPP) are interaction with STAM. Ser243 carries the phosphoserine modification. Positions 257 to 388 (IVVPRNLCSE…LTDYGLQEIS (132 aa)) constitute an MPN domain. His335, His337, Asp348, His350, Cys390, His396, and His398 together coordinate Zn(2+). Residues 335–348 (HTHPTQTAFLSSVD) carry the JAMM motif motif.

The protein belongs to the peptidase M67C family. In terms of assembly, interacts with STAM. Interacts with SMAD6 and SMAD7. Interacts with CHMP3; the interaction appears to relieve the autoinhibition of CHMP3. Interacts with SMURF2 and RNF11; this interaction promotes ubiquitination. The cofactor is Zn(2+). Phosphorylated after BMP type I receptor activation. In terms of processing, ubiquitinated by SMURF2 in the presence of RNF11. As to expression, expressed in brain.

The protein resides in the nucleus. It is found in the membrane. The protein localises to the cytoplasm. It localises to the early endosome. With respect to regulation, inhibited by N-ethylmaleimide. Zinc metalloprotease that specifically cleaves 'Lys-63'-linked polyubiquitin chains. Does not cleave 'Lys-48'-linked polyubiquitin chains. Plays a role in signal transduction for cell growth and MYC induction mediated by IL-2 and GM-CSF. Potentiates BMP (bone morphogenetic protein) signaling by antagonizing the inhibitory action of SMAD6 and SMAD7. Has a key role in regulation of cell surface receptor-mediated endocytosis and ubiquitin-dependent sorting of receptors to lysosomes. Endosomal localization of STAMBP is required for efficient EGFR degradation but not for its internalization. Involved in the negative regulation of PI3K-AKT-mTOR and RAS-MAP signaling pathways. The protein is STAM-binding protein (Stambp) of Mus musculus (Mouse).